The chain runs to 251 residues: Ubiquinone/menaquinone biosynthesis C-methyltransferase UbiE (251 aa).

Residues threonine 74, aspartate 95, 123-124 (NA), and serine 140 each bind S-adenosyl-L-methionine.

This sequence belongs to the class I-like SAM-binding methyltransferase superfamily. MenG/UbiE family.

The catalysed reaction is a 2-demethylmenaquinol + S-adenosyl-L-methionine = a menaquinol + S-adenosyl-L-homocysteine + H(+). It carries out the reaction a 2-methoxy-6-(all-trans-polyprenyl)benzene-1,4-diol + S-adenosyl-L-methionine = a 5-methoxy-2-methyl-3-(all-trans-polyprenyl)benzene-1,4-diol + S-adenosyl-L-homocysteine + H(+). The protein operates within quinol/quinone metabolism; menaquinone biosynthesis; menaquinol from 1,4-dihydroxy-2-naphthoate: step 2/2. Its pathway is cofactor biosynthesis; ubiquinone biosynthesis. In terms of biological role, methyltransferase required for the conversion of demethylmenaquinol (DMKH2) to menaquinol (MKH2) and the conversion of 2-polyprenyl-6-methoxy-1,4-benzoquinol (DDMQH2) to 2-polyprenyl-3-methyl-6-methoxy-1,4-benzoquinol (DMQH2). This is Ubiquinone/menaquinone biosynthesis C-methyltransferase UbiE from Pectobacterium carotovorum subsp. carotovorum (strain PC1).